The sequence spans 68 residues: Large ribosomal subunit protein uL29 (68 aa).

This sequence belongs to the universal ribosomal protein uL29 family.

The chain is Large ribosomal subunit protein uL29 from Finegoldia magna (strain ATCC 29328 / DSM 20472 / WAL 2508) (Peptostreptococcus magnus).